The following is a 1622-amino-acid chain: WD repeat-containing protein 97 (1622 aa).

WD repeat units lie at residues 187-233, 290-329, 331-370, 552-592, 594-633, and 687-726; these read SEQG…RRLV, LHKTTISDLAYCEEVEAMVTASRDSTVKVWEADWQIRMVF, GHTGPVTAMTVLPNTTLVLSASQDGTLRTWDLQAAAQVGE, ELRC…TVFQ, EAHSPGPVVAIASTWNSIVSSGGDLTVKMWRVFPYAEESL, and DPTDHITGLCCCPTLKLYACSSLDCTVRIWTAENRLLRLL. 2 disordered regions span residues 1090–1112 and 1453–1472; these read GEKPGEEGEEDKKEEEEEKEDEE and LHPAGPAQLPGEPPPLEETD. Positions 1094-1118 form a coiled coil; that stretch reads GEEGEEDKKEEEEEKEDEELDWALA. Over residues 1096-1112 the composition is skewed to acidic residues; it reads EGEEDKKEEEEEKEDEE.

The protein is WD repeat-containing protein 97 of Homo sapiens (Human).